The chain runs to 150 residues: Flagellar assembly factor FliW (150 aa).

This sequence belongs to the FliW family. As to quaternary structure, interacts with translational regulator CsrA and flagellin(s).

It is found in the cytoplasm. Acts as an anti-CsrA protein, binds CsrA and prevents it from repressing translation of its target genes, one of which is flagellin. Binds to flagellin and participates in the assembly of the flagellum. The sequence is that of Flagellar assembly factor FliW from Leptospira borgpetersenii serovar Hardjo-bovis (strain L550).